A 151-amino-acid chain; its full sequence is Methylated-DNA--protein-cysteine methyltransferase (151 aa).

Cys119 acts as the Nucleophile; methyl group acceptor in catalysis.

This sequence belongs to the MGMT family.

The protein localises to the cytoplasm. It carries out the reaction a 6-O-methyl-2'-deoxyguanosine in DNA + L-cysteinyl-[protein] = S-methyl-L-cysteinyl-[protein] + a 2'-deoxyguanosine in DNA. The catalysed reaction is a 4-O-methyl-thymidine in DNA + L-cysteinyl-[protein] = a thymidine in DNA + S-methyl-L-cysteinyl-[protein]. Its function is as follows. Involved in the cellular defense against the biological effects of O6-methylguanine (O6-MeG) and O4-methylthymine (O4-MeT) in DNA. Repairs the methylated nucleobase in DNA by stoichiometrically transferring the methyl group to a cysteine residue in the enzyme. This is a suicide reaction: the enzyme is irreversibly inactivated. This chain is Methylated-DNA--protein-cysteine methyltransferase, found in Saccharolobus islandicus (strain M.16.27) (Sulfolobus islandicus).